The primary structure comprises 555 residues: (+)-delta-cadinene synthase isozyme A (555 aa).

A disordered region spans residues 1–22 (MASQASQVLASPHPAISSENRP). Mg(2+) contacts are provided by Asp308, Asp312, Asp452, and Glu456. The DDXXD motif motif lies at 308–312 (DDTYD).

It belongs to the terpene synthase family. Requires Mg(2+) as cofactor.

It catalyses the reaction (2E,6E)-farnesyl diphosphate = (1S,8aR)-delta-cadinene + diphosphate. Its pathway is secondary metabolite biosynthesis; terpenoid biosynthesis. Responsible for the cyclization of trans,trans-farnesyl diphosphate (FPP) to (+)-delta cadinene. This chain is (+)-delta-cadinene synthase isozyme A (CAD1-A), found in Gossypium arboreum (Tree cotton).